Reading from the N-terminus, the 224-residue chain is PKHD-type hydroxylase HNE_1625 (224 aa).

The 99-residue stretch at 77 to 175 folds into the Fe2OG dioxygenase domain; it reads KFAPPLISCS…RFVFVGWIQS (99 aa). Residues H95, D97, and H156 each coordinate Fe cation. Residue R166 participates in 2-oxoglutarate binding.

Requires Fe(2+) as cofactor. It depends on L-ascorbate as a cofactor.

In Hyphomonas neptunium (strain ATCC 15444), this protein is PKHD-type hydroxylase HNE_1625.